A 463-amino-acid chain; its full sequence is Glutamate--tRNA ligase 1 (463 aa).

Positions 10–20 (PSPTGFLHIGS) match the 'HIGH' region motif. Positions 239–243 (KLSKR) match the 'KMSKS' region motif. Lysine 242 contributes to the ATP binding site.

This sequence belongs to the class-I aminoacyl-tRNA synthetase family. Glutamate--tRNA ligase type 1 subfamily. In terms of assembly, monomer.

It localises to the cytoplasm. The enzyme catalyses tRNA(Glu) + L-glutamate + ATP = L-glutamyl-tRNA(Glu) + AMP + diphosphate. Catalyzes the attachment of glutamate to tRNA(Glu) in a two-step reaction: glutamate is first activated by ATP to form Glu-AMP and then transferred to the acceptor end of tRNA(Glu). The sequence is that of Glutamate--tRNA ligase 1 from Rickettsia canadensis (strain McKiel).